The following is a 502-amino-acid chain: mRNA cap guanine-N(7) methyltransferase (502 aa).

The interval 1-118 (MADENPQAQG…SQQEEAMRFS (118 aa)) is disordered. Basic and acidic residues predominate over residues 93-115 (LVDRETLRRRQEERERSQQEEAM). Residues 146–502 (SKIKGLRSFN…FYHAFCFYKV (357 aa)) form the mRNA cap 0 methyltransferase domain. 155-156 (NN) provides a ligand contact to mRNA. Residues Lys-159, Gly-202, Asp-226, Asp-264, 307–309 (MFT), and Tyr-312 contribute to the S-adenosyl-L-methionine site. Over residues 360–369 (ERETAAKKEE) the composition is skewed to basic and acidic residues. A disordered region spans residues 360–381 (ERETAAKKEEAEPEDGEVEEDD). Residues 370-381 (AEPEDGEVEEDD) show a composition bias toward acidic residues.

Belongs to the class I-like SAM-binding methyltransferase superfamily. mRNA cap 0 methyltransferase family.

It is found in the nucleus. The catalysed reaction is a 5'-end (5'-triphosphoguanosine)-ribonucleoside in mRNA + S-adenosyl-L-methionine = a 5'-end (N(7)-methyl 5'-triphosphoguanosine)-ribonucleoside in mRNA + S-adenosyl-L-homocysteine. Responsible for methylating the 5'-cap structure of mRNAs. The protein is mRNA cap guanine-N(7) methyltransferase (abd1) of Aspergillus oryzae (strain ATCC 42149 / RIB 40) (Yellow koji mold).